We begin with the raw amino-acid sequence, 542 residues long: CTP synthase (542 aa).

The tract at residues 1–265 is amidoligase domain; the sequence is MTAFIFITGG…GRMLTELLKV (265 aa). A CTP-binding site is contributed by S13. S13 is a UTP binding site. 14-19 contacts ATP; that stretch reads SVGKGI. Residue Y54 coordinates L-glutamine. D71 provides a ligand contact to ATP. Positions 71 and 140 each coordinate Mg(2+). Residues 147-149, 186-191, and K222 each bind CTP; these read DYE and KTKPLQ. UTP contacts are provided by residues 186 to 191 and K222; that span reads KTKPLQ. The 236-residue stretch at 297–532 folds into the Glutamine amidotransferase type-1 domain; that stretch reads YVKLRDAYIS…LKAALARKMG (236 aa). G352 provides a ligand contact to L-glutamine. C379 serves as the catalytic Nucleophile; for glutamine hydrolysis. Residues 380–383, E403, and R460 contribute to the L-glutamine site; that span reads YGMQ. Catalysis depends on residues H505 and E507.

It belongs to the CTP synthase family. As to quaternary structure, homotetramer.

The catalysed reaction is UTP + L-glutamine + ATP + H2O = CTP + L-glutamate + ADP + phosphate + 2 H(+). The enzyme catalyses L-glutamine + H2O = L-glutamate + NH4(+). It catalyses the reaction UTP + NH4(+) + ATP = CTP + ADP + phosphate + 2 H(+). The protein operates within pyrimidine metabolism; CTP biosynthesis via de novo pathway; CTP from UDP: step 2/2. Its activity is regulated as follows. Allosterically activated by GTP, when glutamine is the substrate; GTP has no effect on the reaction when ammonia is the substrate. The allosteric effector GTP functions by stabilizing the protein conformation that binds the tetrahedral intermediate(s) formed during glutamine hydrolysis. Inhibited by the product CTP, via allosteric rather than competitive inhibition. In terms of biological role, catalyzes the ATP-dependent amination of UTP to CTP with either L-glutamine or ammonia as the source of nitrogen. Regulates intracellular CTP levels through interactions with the four ribonucleotide triphosphates. The polypeptide is CTP synthase (Caldivirga maquilingensis (strain ATCC 700844 / DSM 13496 / JCM 10307 / IC-167)).